The sequence spans 82 residues: ATP synthase subunit c, chloroplastic (82 aa).

2 consecutive transmembrane segments (helical) span residues 3–23 and 57–77; these read PIVA…AAIG and FAFM…LLFA.

This sequence belongs to the ATPase C chain family. F-type ATPases have 2 components, F(1) - the catalytic core - and F(0) - the membrane proton channel. F(1) has five subunits: alpha(3), beta(3), gamma(1), delta(1), epsilon(1). F(0) has four main subunits: a(1), b(1), b'(1) and c(10-14). The alpha and beta chains form an alternating ring which encloses part of the gamma chain. F(1) is attached to F(0) by a central stalk formed by the gamma and epsilon chains, while a peripheral stalk is formed by the delta, b and b' chains.

Its subcellular location is the plastid. The protein localises to the chloroplast thylakoid membrane. Functionally, f(1)F(0) ATP synthase produces ATP from ADP in the presence of a proton or sodium gradient. F-type ATPases consist of two structural domains, F(1) containing the extramembraneous catalytic core and F(0) containing the membrane proton channel, linked together by a central stalk and a peripheral stalk. During catalysis, ATP synthesis in the catalytic domain of F(1) is coupled via a rotary mechanism of the central stalk subunits to proton translocation. Its function is as follows. Key component of the F(0) channel; it plays a direct role in translocation across the membrane. A homomeric c-ring of between 10-14 subunits forms the central stalk rotor element with the F(1) delta and epsilon subunits. The sequence is that of ATP synthase subunit c, chloroplastic from Tetradesmus obliquus (Green alga).